An 839-amino-acid polypeptide reads, in one-letter code: Protein translocase subunit SecA (839 aa).

ATP contacts are provided by residues Q85, 103-107 (GEGKT), and D493. Positions 780-790 (QIHEQERERAS) are enriched in basic and acidic residues. A disordered region spans residues 780 to 839 (QIHEQERERASQRATTAAPQNIQSQQSANTDDLPKVERNEACPCGSGKKFKNCHGRKSFS). A compositionally biased stretch (polar residues) spans 791-809 (QRATTAAPQNIQSQQSANT). Residues C821, C823, C832, and H833 each coordinate Zn(2+). Over residues 827 to 839 (KKFKNCHGRKSFS) the composition is skewed to basic residues.

The protein belongs to the SecA family. In terms of assembly, monomer and homodimer. Part of the essential Sec protein translocation apparatus which comprises SecA, SecYEG and auxiliary proteins SecDF. Other proteins may also be involved. Requires Zn(2+) as cofactor.

The protein resides in the cell membrane. It localises to the cytoplasm. It catalyses the reaction ATP + H2O + cellular proteinSide 1 = ADP + phosphate + cellular proteinSide 2.. Functionally, part of the Sec protein translocase complex. Interacts with the SecYEG preprotein conducting channel. Has a central role in coupling the hydrolysis of ATP to the transfer of proteins into and across the cell membrane, serving as an ATP-driven molecular motor driving the stepwise translocation of polypeptide chains across the membrane. This Streptococcus pyogenes serotype M6 (strain ATCC BAA-946 / MGAS10394) protein is Protein translocase subunit SecA.